A 156-amino-acid polypeptide reads, in one-letter code: 6,7-dimethyl-8-ribityllumazine synthase (156 aa).

Residues F23, 57 to 59 (AFE), and 81 to 83 (AVI) contribute to the 5-amino-6-(D-ribitylamino)uracil site. Position 86 to 87 (86 to 87 (AT)) interacts with (2S)-2-hydroxy-3-oxobutyl phosphate. H89 serves as the catalytic Proton donor. A 5-amino-6-(D-ribitylamino)uracil-binding site is contributed by F114. Position 128 (R128) interacts with (2S)-2-hydroxy-3-oxobutyl phosphate.

Belongs to the DMRL synthase family.

It carries out the reaction (2S)-2-hydroxy-3-oxobutyl phosphate + 5-amino-6-(D-ribitylamino)uracil = 6,7-dimethyl-8-(1-D-ribityl)lumazine + phosphate + 2 H2O + H(+). Its pathway is cofactor biosynthesis; riboflavin biosynthesis; riboflavin from 2-hydroxy-3-oxobutyl phosphate and 5-amino-6-(D-ribitylamino)uracil: step 1/2. Its function is as follows. Catalyzes the formation of 6,7-dimethyl-8-ribityllumazine by condensation of 5-amino-6-(D-ribitylamino)uracil with 3,4-dihydroxy-2-butanone 4-phosphate. This is the penultimate step in the biosynthesis of riboflavin. The polypeptide is 6,7-dimethyl-8-ribityllumazine synthase (Sulfurovum sp. (strain NBC37-1)).